The sequence spans 484 residues: Aspartyl/glutamyl-tRNA(Asn/Gln) amidotransferase subunit B (484 aa).

It belongs to the GatB/GatE family. GatB subfamily. As to quaternary structure, heterotrimer of A, B and C subunits.

It catalyses the reaction L-glutamyl-tRNA(Gln) + L-glutamine + ATP + H2O = L-glutaminyl-tRNA(Gln) + L-glutamate + ADP + phosphate + H(+). The catalysed reaction is L-aspartyl-tRNA(Asn) + L-glutamine + ATP + H2O = L-asparaginyl-tRNA(Asn) + L-glutamate + ADP + phosphate + 2 H(+). Functionally, allows the formation of correctly charged Asn-tRNA(Asn) or Gln-tRNA(Gln) through the transamidation of misacylated Asp-tRNA(Asn) or Glu-tRNA(Gln) in organisms which lack either or both of asparaginyl-tRNA or glutaminyl-tRNA synthetases. The reaction takes place in the presence of glutamine and ATP through an activated phospho-Asp-tRNA(Asn) or phospho-Glu-tRNA(Gln). The chain is Aspartyl/glutamyl-tRNA(Asn/Gln) amidotransferase subunit B from Bordetella parapertussis (strain 12822 / ATCC BAA-587 / NCTC 13253).